A 222-amino-acid polypeptide reads, in one-letter code: 7-cyano-7-deazaguanine synthase (222 aa).

Residue 8 to 18 (LSGGMDSTTAA) coordinates ATP. Positions 187, 195, 198, and 201 each coordinate Zn(2+).

This sequence belongs to the QueC family. Requires Zn(2+) as cofactor.

It carries out the reaction 7-carboxy-7-deazaguanine + NH4(+) + ATP = 7-cyano-7-deazaguanine + ADP + phosphate + H2O + H(+). The protein operates within purine metabolism; 7-cyano-7-deazaguanine biosynthesis. Catalyzes the ATP-dependent conversion of 7-carboxy-7-deazaguanine (CDG) to 7-cyano-7-deazaguanine (preQ(0)). This chain is 7-cyano-7-deazaguanine synthase, found in Nautilia profundicola (strain ATCC BAA-1463 / DSM 18972 / AmH).